The sequence spans 363 residues: MTTENQNPLVLDKNEEISQQKADDIRLQLRQEPEVKRLAQQIDVKNQMELLEYGKEPAVEISKFSDRILGMMKTTSVTDSGTMLTQLGKIMDRFDKNDFDEPKGLMAKIFKRGGSMIEKIFKKYQTLGGEIEKIHVEISKYKDEMTKTNYTLDEMYENNIKYYMELEKYVVAGQMKLEEMQSILPSYEEKAASGNQLAQMQLDTLRNGIQALEERVYDLDMARMVALQTAPQIRLLQRGNAKLIGKINSAFIITIPIFKNGIIQAVTVKRQKLVADSMSELDRRTNEMLKRNAENISSQSVEIARMAGRPSIDIETIESSWNTIVSGMQETKQIEEENKRLREDGARRIAQLQDNIKKAALQQ.

This sequence belongs to the TelA family.

This is an uncharacterized protein from Bacillus subtilis (strain 168).